The chain runs to 275 residues: Aliphatic sulfonates import ATP-binding protein SsuB 1 (275 aa).

The ABC transporter domain occupies 34 to 260 (ISLTGLEKSF…RHGHPGLCEL (227 aa)). 66-73 (GKSGCGKS) provides a ligand contact to ATP.

The protein belongs to the ABC transporter superfamily. Aliphatic sulfonates importer (TC 3.A.1.17.2) family. The complex is composed of two ATP-binding proteins (SsuB), two transmembrane proteins (SsuC) and a solute-binding protein (SsuA).

It is found in the cell inner membrane. It catalyses the reaction ATP + H2O + aliphatic sulfonate-[sulfonate-binding protein]Side 1 = ADP + phosphate + aliphatic sulfonateSide 2 + [sulfonate-binding protein]Side 1.. Functionally, part of the ABC transporter complex SsuABC involved in aliphatic sulfonates import. Responsible for energy coupling to the transport system. This Rhizobium johnstonii (strain DSM 114642 / LMG 32736 / 3841) (Rhizobium leguminosarum bv. viciae) protein is Aliphatic sulfonates import ATP-binding protein SsuB 1.